The primary structure comprises 354 residues: Stimulator of interferon genes protein 3 (354 aa).

4 helical membrane-spanning segments follow: residues 20–40 (VTFA…FALW), 48–68 (INFV…GELI), 101–121 (YGSC…YALL), and 132–152 (YGIF…IVGI). Residues asparagine 178, tyrosine 183, arginine 250, isoleucine 251, lysine 253, glutamate 272, serine 275, and asparagine 276 each contribute to the 3',3'-cGAMP site.

The protein belongs to the STING family.

It is found in the membrane. Functionally, facilitator of innate immune signaling that acts as a sensor of second messenger signals produced by cyclic GMP-AMP synthase-like receptors (cGLRs) and promotes the production of type I interferon. Innate immune response is triggered in response to nucleotides from viruses and bacteria delivered to the cytoplasm. Acts by binding cyclic dinucleotides: recognizes and binds cyclic 3'-3' linked cGAMP (3'-3'-cGAMP), cyclic di-AMP (3',3'-c-di-AMP) and cyclic di-GMP (3',3'-c-di-GMP) second messengers produced by cGLRs in response to nucleotides in the cytosol, such as double-stranded RNA (dsRNA). Upon binding to 3'-3'-cGAMP, 3',3'-c-di-AMP or 3',3'-c-di-GMP, oligomerizes and promotes the recruitment and subsequent activation of the transcription factor IRF3 to induce expression of type I interferon. This chain is Stimulator of interferon genes protein 3, found in Stylophora pistillata (Smooth cauliflower coral).